The sequence spans 142 residues: Nucleoside diphosphate kinase (142 aa).

Lys-11, Phe-59, Arg-87, Thr-93, Arg-104, and Asn-114 together coordinate ATP. His-117 acts as the Pros-phosphohistidine intermediate in catalysis.

The protein belongs to the NDK family. Homotetramer. Mg(2+) is required as a cofactor.

Its subcellular location is the cytoplasm. The catalysed reaction is a 2'-deoxyribonucleoside 5'-diphosphate + ATP = a 2'-deoxyribonucleoside 5'-triphosphate + ADP. The enzyme catalyses a ribonucleoside 5'-diphosphate + ATP = a ribonucleoside 5'-triphosphate + ADP. Functionally, major role in the synthesis of nucleoside triphosphates other than ATP. The ATP gamma phosphate is transferred to the NDP beta phosphate via a ping-pong mechanism, using a phosphorylated active-site intermediate. The polypeptide is Nucleoside diphosphate kinase (Salinibacter ruber (strain DSM 13855 / M31)).